Reading from the N-terminus, the 657-residue chain is Katanin p80 WD40 repeat-containing subunit B1 (657 aa).

WD repeat units lie at residues 18 to 58 (AHSS…CVMS), 61 to 100 (GHTT…ILRT), 103 to 142 (GHKA…CIFK), 145 to 184 (SHTQ…VMFE), 187 to 226 (GHSG…VVSC), and 229 to 269 (EEAT…DVVV). 2 disordered regions span residues 318–410 (NNEL…EDEP) and 423–454 (VEVQ…RAEP). Residues 325–345 (PTPTGSSLRRSYDRPSTSCSK) are compositionally biased toward polar residues. The segment covering 351–385 (HSSESERRSPSSEEDRDEKESKAEIQNPEDYKEIF) has biased composition (basic and acidic residues).

This sequence belongs to the WD repeat KATNB1 family. Interacts with KATNA1. This interaction enhances the microtubule binding and severing activity of KATNA1 and also targets this activity to the centrosome.

The protein localises to the cytoplasm. Its subcellular location is the cytoskeleton. The protein resides in the microtubule organizing center. It is found in the centrosome. It localises to the spindle pole. The protein localises to the spindle. Participates in a complex which severs microtubules in an ATP-dependent manner. May act to target the enzymatic subunit of this complex to sites of action such as the centrosome. Microtubule severing may promote rapid reorganization of cellular microtubule arrays and the release of microtubules from the centrosome following nucleation. This is Katanin p80 WD40 repeat-containing subunit B1 from Gallus gallus (Chicken).